Here is a 276-residue protein sequence, read N- to C-terminus: Dermonecrotic toxin LdSicTox-alphaIB2 (276 aa).

The active site involves His-5. Mg(2+) is bound by residues Glu-25 and Asp-27. His-41 serves as the catalytic Nucleophile. 2 disulfide bridges follow: Cys-45–Cys-51 and Cys-47–Cys-190. A Mg(2+)-binding site is contributed by Asp-85. Asn-253 carries N-linked (GlcNAc...) asparagine glycosylation.

This sequence belongs to the arthropod phospholipase D family. Class II subfamily. Mg(2+) serves as cofactor. Expressed by the venom gland.

It is found in the secreted. It carries out the reaction an N-(acyl)-sphingosylphosphocholine = an N-(acyl)-sphingosyl-1,3-cyclic phosphate + choline. The enzyme catalyses an N-(acyl)-sphingosylphosphoethanolamine = an N-(acyl)-sphingosyl-1,3-cyclic phosphate + ethanolamine. It catalyses the reaction a 1-acyl-sn-glycero-3-phosphocholine = a 1-acyl-sn-glycero-2,3-cyclic phosphate + choline. The catalysed reaction is a 1-acyl-sn-glycero-3-phosphoethanolamine = a 1-acyl-sn-glycero-2,3-cyclic phosphate + ethanolamine. Dermonecrotic toxins cleave the phosphodiester linkage between the phosphate and headgroup of certain phospholipids (sphingolipid and lysolipid substrates), forming an alcohol (often choline) and a cyclic phosphate. This toxin acts on sphingomyelin (SM). It may also act on ceramide phosphoethanolamine (CPE), lysophosphatidylcholine (LPC) and lysophosphatidylethanolamine (LPE), but not on lysophosphatidylserine (LPS), and lysophosphatidylglycerol (LPG). It acts by transphosphatidylation, releasing exclusively cyclic phosphate products as second products. Induces dermonecrosis, hemolysis, increased vascular permeability, edema, inflammatory response, and platelet aggregation. In Loxosceles deserta (Desert recluse spider), this protein is Dermonecrotic toxin LdSicTox-alphaIB2.